Consider the following 376-residue polypeptide: DNA replication and repair protein RecF (376 aa).

Residue 30–37 (GNNAQGKS) participates in ATP binding.

It belongs to the RecF family.

It localises to the cytoplasm. In terms of biological role, the RecF protein is involved in DNA metabolism; it is required for DNA replication and normal SOS inducibility. RecF binds preferentially to single-stranded, linear DNA. It also seems to bind ATP. This Trichormus variabilis (strain ATCC 29413 / PCC 7937) (Anabaena variabilis) protein is DNA replication and repair protein RecF.